We begin with the raw amino-acid sequence, 259 residues long: Deoxyribose-phosphate aldolase (259 aa).

Aspartate 102 (proton donor/acceptor) is an active-site residue. Lysine 167 serves as the catalytic Schiff-base intermediate with acetaldehyde. Catalysis depends on lysine 201, which acts as the Proton donor/acceptor.

It belongs to the DeoC/FbaB aldolase family. DeoC type 2 subfamily.

The protein localises to the cytoplasm. The enzyme catalyses 2-deoxy-D-ribose 5-phosphate = D-glyceraldehyde 3-phosphate + acetaldehyde. The protein operates within carbohydrate degradation; 2-deoxy-D-ribose 1-phosphate degradation; D-glyceraldehyde 3-phosphate and acetaldehyde from 2-deoxy-alpha-D-ribose 1-phosphate: step 2/2. In terms of biological role, catalyzes a reversible aldol reaction between acetaldehyde and D-glyceraldehyde 3-phosphate to generate 2-deoxy-D-ribose 5-phosphate. This is Deoxyribose-phosphate aldolase from Cronobacter sakazakii (strain ATCC BAA-894) (Enterobacter sakazakii).